Here is a 403-residue protein sequence, read N- to C-terminus: Argininosuccinate synthase (403 aa).

Residues 13–21 (AYSGGLDTS) and Ala40 each bind ATP. Tyr92 and Ser97 together coordinate L-citrulline. ATP is bound at residue Gly122. L-aspartate-binding residues include Thr124, Asn128, and Asp129. Asn128 is a binding site for L-citrulline. Residues Arg132, Ser181, Ser190, Glu266, and Tyr278 each coordinate L-citrulline.

The protein belongs to the argininosuccinate synthase family. Type 1 subfamily. As to quaternary structure, homotetramer.

The protein resides in the cytoplasm. The catalysed reaction is L-citrulline + L-aspartate + ATP = 2-(N(omega)-L-arginino)succinate + AMP + diphosphate + H(+). It participates in amino-acid biosynthesis; L-arginine biosynthesis; L-arginine from L-ornithine and carbamoyl phosphate: step 2/3. This chain is Argininosuccinate synthase, found in Aliivibrio fischeri (strain ATCC 700601 / ES114) (Vibrio fischeri).